Here is a 378-residue protein sequence, read N- to C-terminus: DNA replication and repair protein RecF (378 aa).

An ATP-binding site is contributed by 30 to 37 (GRNGQGKT).

The protein belongs to the RecF family.

The protein resides in the cytoplasm. Its function is as follows. The RecF protein is involved in DNA metabolism; it is required for DNA replication and normal SOS inducibility. RecF binds preferentially to single-stranded, linear DNA. It also seems to bind ATP. This chain is DNA replication and repair protein RecF, found in Frankia alni (strain DSM 45986 / CECT 9034 / ACN14a).